We begin with the raw amino-acid sequence, 182 residues long: Heat shock protein beta-2 (182 aa).

A sHSP domain is found at 55–163 (RAGEGARAGA…DTEVNEVYIS (109 aa)).

This sequence belongs to the small heat shock protein (HSP20) family. As to quaternary structure, interacts with DMPK; may enhance its kinase activity.

The protein resides in the cytoplasm. Its subcellular location is the nucleus. Functionally, may regulate the kinase DMPK. In Mus musculus (Mouse), this protein is Heat shock protein beta-2 (Hspb2).